We begin with the raw amino-acid sequence, 714 residues long: P-loop NTPase domain-containing protein LPA1 (714 aa).

The segment covering 1-11 (MPMPPQCASSK) has biased composition (low complexity). Disordered stretches follow at residues 1–42 (MPMP…PPPK), 259–293 (QKLD…PRTE), and 595–689 (FGSE…GSGN). Over residues 271–285 (EGRDDTSDDKAHHGS) the composition is skewed to basic and acidic residues. The span at 595-617 (FGSEEDADDPPDAGTDEDLTDEE) shows a compositional bias: acidic residues. The segment covering 618–636 (RDMHEIEAGSVDEHSTKSD) has biased composition (basic and acidic residues). The span at 659–670 (AASSTKNSSNQE) shows a compositional bias: polar residues.

As to expression, expressed in roots, leaf blade shoots, leaf sheath shoots and panicles.

Required for the accumulation of phytic acid in seeds. Phytic acid is the primary storage form of phosphorus in cereal grains and other plant seeds. The protein is P-loop NTPase domain-containing protein LPA1 of Oryza sativa subsp. japonica (Rice).